Consider the following 428-residue polypeptide: Adenylosuccinate synthetase (428 aa).

GTP contacts are provided by residues 12–18 (GDEGKGK) and 40–42 (GHT). Catalysis depends on Asp-13, which acts as the Proton acceptor. Residues Asp-13 and Gly-40 each contribute to the Mg(2+) site. Residues 13 to 16 (DEGK), 38 to 41 (NAGH), Thr-133, Arg-147, Asn-224, Thr-239, and Arg-303 each bind IMP. The Proton donor role is filled by His-41. 299–305 (TTTGRRR) is a substrate binding site. Residues Arg-305, 331 to 333 (KLD), and 413 to 415 (GVG) contribute to the GTP site.

This sequence belongs to the adenylosuccinate synthetase family. As to quaternary structure, homodimer. The cofactor is Mg(2+).

It is found in the cytoplasm. The enzyme catalyses IMP + L-aspartate + GTP = N(6)-(1,2-dicarboxyethyl)-AMP + GDP + phosphate + 2 H(+). It functions in the pathway purine metabolism; AMP biosynthesis via de novo pathway; AMP from IMP: step 1/2. Plays an important role in the de novo pathway and in the salvage pathway of purine nucleotide biosynthesis. Catalyzes the first committed step in the biosynthesis of AMP from IMP. The protein is Adenylosuccinate synthetase of Coprinopsis cinerea (strain Okayama-7 / 130 / ATCC MYA-4618 / FGSC 9003) (Inky cap fungus).